A 383-amino-acid polypeptide reads, in one-letter code: Acetylornithine deacetylase (383 aa).

Histidine 80 contacts Zn(2+). Residue aspartate 82 is part of the active site. Aspartate 112 provides a ligand contact to Zn(2+). Glutamate 144 is an active-site residue. Zn(2+) is bound by residues glutamate 145, glutamate 169, and histidine 355.

This sequence belongs to the peptidase M20A family. ArgE subfamily. Homodimer. The cofactor is Zn(2+). Co(2+) serves as cofactor. Glutathione is required as a cofactor.

It is found in the cytoplasm. The catalysed reaction is N(2)-acetyl-L-ornithine + H2O = L-ornithine + acetate. Its pathway is amino-acid biosynthesis; L-arginine biosynthesis; L-ornithine from N(2)-acetyl-L-ornithine (linear): step 1/1. Its function is as follows. Catalyzes the hydrolysis of the amide bond of N(2)-acetylated L-amino acids. Cleaves the acetyl group from N-acetyl-L-ornithine to form L-ornithine, an intermediate in L-arginine biosynthesis pathway, and a branchpoint in the synthesis of polyamines. This is Acetylornithine deacetylase from Salmonella agona (strain SL483).